The primary structure comprises 1019 residues: Sca1 complex protein phr (1019 aa).

Disordered stretches follow at residues Ile-89–Phe-118, Ala-131–Asn-202, Gln-265–Asn-287, and Ser-512–Leu-546. The segment covering Ser-93–Ser-102 has biased composition (low complexity). Over residues Asn-141–Asp-155 the composition is skewed to basic and acidic residues. Positions Asn-158–Asn-188 form a coiled coil. A compositionally biased stretch (low complexity) spans Asn-158–Asn-202. The region spanning Glu-735–Phe-836 is the PH domain. The span at Val-860–Gly-872 shows a compositional bias: low complexity. Disordered regions lie at residues Val-860–Ile-890, Asn-904–Leu-951, and Ser-977–Lys-1019. Positions Thr-879 to Ile-890 are enriched in polar residues. Residues Ser-977–Ser-986 are compositionally biased toward low complexity. A compositionally biased stretch (polar residues) spans Pro-987–Lys-1019.

Component of the Sca1 complex composed of at least gefA, gefH, scaA, phr, and the protein phosphatase 2A subunits pppA and pho2B. Interacts directly with gefH.

The protein resides in the cell membrane. In terms of biological role, component of the Sca1 complex, a regulator of cell motility, chemotaxis and signal relay. The Sca1 complex is recruited to the plasma membrane in a chemoattractant- and F-actin-dependent manner and is enriched at the leading edge of chemotaxing cells where it regulates F-actin dynamics and signal relay by controlling the activation of rasC and the downstream target of rapamycin complex 2 (TORC2)-Akt/protein kinase B (PKB) pathway. This Dictyostelium discoideum (Social amoeba) protein is Sca1 complex protein phr.